The following is a 258-amino-acid chain: MSFFLTTPTAIDLGVNIDHVATLRNVRGTTYPDPIRAALAAEEAGADAITLHLREDRRHIVDADVRKLRPLLKTRMNLECAVTTEMLDIACEVRPHDACLVPEKREELTTEGGLDVAGHFEAVRAACKQLADVGVRVSLFIDPDETQIRAAHEAGAPVIELHTGRYAEAHDEAEQQREYERIVAGVQAGAQLGLKVNAGHGLHYTNVQQIAAIDGIVELNIGHAIVAHAIFAGWDNAVREMKAIMVAARVAALHGGAR.

A 3-amino-2-oxopropyl phosphate-binding site is contributed by Asn16. 18–19 (DH) serves as a coordination point for 1-deoxy-D-xylulose 5-phosphate. Arg27 provides a ligand contact to 3-amino-2-oxopropyl phosphate. The Proton acceptor role is filled by His52. Arg54 and His59 together coordinate 1-deoxy-D-xylulose 5-phosphate. Glu79 (proton acceptor) is an active-site residue. 1-deoxy-D-xylulose 5-phosphate is bound at residue Thr109. Catalysis depends on His200, which acts as the Proton donor. Residues Gly201 and 222 to 223 (GH) each bind 3-amino-2-oxopropyl phosphate.

Belongs to the PNP synthase family. In terms of assembly, homooctamer; tetramer of dimers.

The protein localises to the cytoplasm. The enzyme catalyses 3-amino-2-oxopropyl phosphate + 1-deoxy-D-xylulose 5-phosphate = pyridoxine 5'-phosphate + phosphate + 2 H2O + H(+). It functions in the pathway cofactor biosynthesis; pyridoxine 5'-phosphate biosynthesis; pyridoxine 5'-phosphate from D-erythrose 4-phosphate: step 5/5. Catalyzes the complicated ring closure reaction between the two acyclic compounds 1-deoxy-D-xylulose-5-phosphate (DXP) and 3-amino-2-oxopropyl phosphate (1-amino-acetone-3-phosphate or AAP) to form pyridoxine 5'-phosphate (PNP) and inorganic phosphate. The chain is Pyridoxine 5'-phosphate synthase from Burkholderia lata (strain ATCC 17760 / DSM 23089 / LMG 22485 / NCIMB 9086 / R18194 / 383).